The primary structure comprises 173 residues: MRIKLNTEDIMRISLFEKMTGANVIDSTSDDEKIVFVVKEGDIGAAIGKGGENVKNATDKFGKKIDLIEYSEDLKQFIKNIFAPIELEDVWVKKFGNDLVVYVRVHPRLRRAIIGDKGKNIDRAVDIAGRLAGVKNIKVVAGLRKDADNRPKKDEIPEKAAESSENVQAEENQ.

The 67-residue stretch at 31 to 97 (DEKIVFVVKE…EDVWVKKFGN (67 aa)) folds into the KH domain. The segment covering 147 to 162 (ADNRPKKDEIPEKAAE) has biased composition (basic and acidic residues). A disordered region spans residues 147–173 (ADNRPKKDEIPEKAAESSENVQAEENQ). Residues 163–173 (SSENVQAEENQ) are compositionally biased toward polar residues.

Belongs to the NusA family.

It is found in the cytoplasm. In terms of biological role, participates in transcription termination. In Methanococcus vannielii (strain ATCC 35089 / DSM 1224 / JCM 13029 / OCM 148 / SB), this protein is Probable transcription termination protein NusA.